The following is a 123-amino-acid chain: Seminal vesicle secretory protein 5 (123 aa).

The signal sequence occupies residues 1-21 (MSPTGFFLLTVLLVLVTEAAS). Residues 50–123 (GSSSTFGAFS…TKVKTRITRK (74 aa)) are disordered. Over residues 64–75 (SRSNFKSKSPSS) the composition is skewed to low complexity. Positions 77 to 87 (TREKVNEESRS) are enriched in basic and acidic residues.

Belongs to the SVP2/SVP5/SVP6 family. In terms of tissue distribution, testis.

The protein localises to the secreted. It localises to the extracellular space. The sequence is that of Seminal vesicle secretory protein 5 (Svs5) from Rattus norvegicus (Rat).